Reading from the N-terminus, the 507-residue chain is Extracellular elastase (507 aa).

A signal peptide spans 1-28 (MKNFSKFALTSIAALTVASPLVNTEVDA). A propeptide spanning residues 29-207 (KDKVSATQNI…VVDKLNMIKE (179 aa)) is cleaved from the precursor. Position 347 (D347) interacts with Ca(2+). Zn(2+) is bound at residue H351. E352 is a catalytic residue. Zn(2+) contacts are provided by H355 and E375. 9 residues coordinate Ca(2+): D386, E388, D389, L391, E394, Y397, T398, V401, and D404. The Proton donor role is filled by H435.

This sequence belongs to the peptidase M4 family. Ca(2+) is required as a cofactor. The cofactor is Zn(2+).

It localises to the secreted. Protease that has a low substrate specificity. Glucagon is preferentially cleaved between aromatic (Phe) and hydrophobic (Val) amino acids. Hydrolyzes casein and elastin. This is Extracellular elastase (sepA) from Staphylococcus epidermidis (strain ATCC 12228 / FDA PCI 1200).